Here is a 380-residue protein sequence, read N- to C-terminus: 1-deoxy-D-xylulose 5-phosphate reductoisomerase (380 aa).

NADPH is bound by residues Thr-9, Gly-10, Ser-11, Val-12, Arg-36, and Asn-117. Lys-118 contacts 1-deoxy-D-xylulose 5-phosphate. An NADPH-binding site is contributed by Glu-119. Asp-139 lines the Mn(2+) pocket. The 1-deoxy-D-xylulose 5-phosphate site is built by Ser-140, Glu-141, Ser-165, and His-188. Glu-141 provides a ligand contact to Mn(2+). Residue Gly-194 coordinates NADPH. Residues Ser-201, Asn-206, Lys-207, and Glu-210 each contribute to the 1-deoxy-D-xylulose 5-phosphate site. Glu-210 contributes to the Mn(2+) binding site.

It belongs to the DXR family. It depends on Mg(2+) as a cofactor. Mn(2+) is required as a cofactor.

It catalyses the reaction 2-C-methyl-D-erythritol 4-phosphate + NADP(+) = 1-deoxy-D-xylulose 5-phosphate + NADPH + H(+). It functions in the pathway isoprenoid biosynthesis; isopentenyl diphosphate biosynthesis via DXP pathway; isopentenyl diphosphate from 1-deoxy-D-xylulose 5-phosphate: step 1/6. Catalyzes the NADPH-dependent rearrangement and reduction of 1-deoxy-D-xylulose-5-phosphate (DXP) to 2-C-methyl-D-erythritol 4-phosphate (MEP). The chain is 1-deoxy-D-xylulose 5-phosphate reductoisomerase from Aquifex aeolicus (strain VF5).